A 119-amino-acid polypeptide reads, in one-letter code: Putative mating-type protein A2 (119 aa).

Positions 38–100 (KPYRGHRFTK…NRRRKEKTIT (63 aa)) form a DNA-binding region, homeobox; TALE-type.

Belongs to the TALE/M-ATYP homeobox family.

Its subcellular location is the nucleus. In terms of biological role, probably not a functional protein. Cells lacking A2 show no obvious alterations in mating, sporulation and cell growth. The polypeptide is Putative mating-type protein A2 (MATA2) (Saccharomyces cerevisiae (Baker's yeast)).